A 154-amino-acid polypeptide reads, in one-letter code: MPLIPTENKLAIYRYLFQEGVLVAPKDFHLAKHPQIETVSNLDVLQILRSFKSRKFVTETFNWQYYYWVLTEEGIKYLRTYLQVPESVVPATMKKQASRPSTYTRSEETKRTGASGDFDPSFNRGDRRQGGDRRGGMGRGQYRTERSAPAPQQN.

The segment at 91 to 154 (ATMKKQASRP…ERSAPAPQQN (64 aa)) is disordered. The segment covering 124-135 (RGDRRQGGDRRG) has biased composition (basic and acidic residues).

It belongs to the eukaryotic ribosomal protein eS10 family.

The protein resides in the cytoplasm. The chain is Small ribosomal subunit protein eS10 (rps10) from Dictyostelium discoideum (Social amoeba).